Here is a 259-residue protein sequence, read N- to C-terminus: Protein snail homolog Sna (259 aa).

Residues 1–20 (MPRSFLVKKHFSASKKPNYS) form an SNAG domain region. Residues 71-113 (DYKKSPISPSSSDDSSKPLDLTSFSSEDEGGKTSDPPSPASSA) are disordered. 5 consecutive C2H2-type zinc fingers follow at residues 119 to 141 (FQCN…KQLH), 150 to 172 (FSCK…IRSH), 176 to 198 (CVCK…IRTH), 204 to 226 (FSCT…LQTH), and 232 to 255 (YQCK…ETGC).

Belongs to the snail C2H2-type zinc-finger protein family. Interacts (via SNAG domain) with limd1 (via LIM domains), wtip (via LIM domains) and ajuba (via LIM domains). Interacts with elp3; the interaction inhibits snai1 ubiquitination and promotes snai1 stability. Post-translationally, ubiquitinated. In terms of tissue distribution, maternal expression is nearly completely restricted to the vegetal hemisphere. Zygotic expression begins in the dorsal marginal zone just before gastrulation (stage 9), and is almost completely absent in the animal hemisphere. At mid-gastrula (stage 11-11.5), expression begins in the ectoderm in an arc surrounding the prospective neural plate. From stage 12, anterior expression is down-regulated, while levels are increased in the prospective neural crest.

Its subcellular location is the nucleus. Its function is as follows. Transcriptional repressor. Acts upstream of snai2/slug, zic5 and other neural crest markers in the specification of the neural crest and neural crest migration. Involved in embryonic mesoderm formation. The sequence is that of Protein snail homolog Sna (snai1) from Xenopus laevis (African clawed frog).